The following is a 176-amino-acid chain: Isopentenyl-diphosphate Delta-isomerase (176 aa).

Residues His24 and His30 each contribute to the Mn(2+) site. A Nudix hydrolase domain is found at 28-160 (LLHRAFSIFV…PSAFTVWFHC (133 aa)). Cys65 is a catalytic residue. Residue His67 participates in Mn(2+) binding. A Mg(2+)-binding site is contributed by Glu85. Mn(2+) contacts are provided by Glu110 and Glu112. Residue Glu112 is part of the active site.

This sequence belongs to the IPP isomerase type 1 family. The cofactor is Mg(2+). Requires Mn(2+) as cofactor.

The protein localises to the cytoplasm. The catalysed reaction is isopentenyl diphosphate = dimethylallyl diphosphate. The protein operates within isoprenoid biosynthesis; dimethylallyl diphosphate biosynthesis; dimethylallyl diphosphate from isopentenyl diphosphate: step 1/1. Catalyzes the 1,3-allylic rearrangement of the homoallylic substrate isopentenyl (IPP) to its highly electrophilic allylic isomer, dimethylallyl diphosphate (DMAPP). In Burkholderia multivorans (strain ATCC 17616 / 249), this protein is Isopentenyl-diphosphate Delta-isomerase.